Here is an 83-residue protein sequence, read N- to C-terminus: Cytochrome b559 subunit alpha (83 aa).

Residues 21–35 (VIHSITIPSLFIAGW) form a helical membrane-spanning segment. His23 is a heme binding site.

This sequence belongs to the PsbE/PsbF family. Heterodimer of an alpha subunit and a beta subunit. PSII is composed of 1 copy each of membrane proteins PsbA, PsbB, PsbC, PsbD, PsbE, PsbF, PsbH, PsbI, PsbJ, PsbK, PsbL, PsbM, PsbT, PsbX, PsbY, PsbZ, Psb30/Ycf12, at least 3 peripheral proteins of the oxygen-evolving complex and a large number of cofactors. It forms dimeric complexes. Heme b serves as cofactor.

Its subcellular location is the plastid. It localises to the chloroplast thylakoid membrane. This b-type cytochrome is tightly associated with the reaction center of photosystem II (PSII). PSII is a light-driven water:plastoquinone oxidoreductase that uses light energy to abstract electrons from H(2)O, generating O(2) and a proton gradient subsequently used for ATP formation. It consists of a core antenna complex that captures photons, and an electron transfer chain that converts photonic excitation into a charge separation. The protein is Cytochrome b559 subunit alpha of Huperzia lucidula (Shining clubmoss).